The primary structure comprises 80 residues: Acyl carrier protein (80 aa).

The 76-residue stretch at 4-79 (EDIFSKVKDI…DAVDFIASKA (76 aa)) folds into the Carrier domain. Ser39 is subject to O-(pantetheine 4'-phosphoryl)serine.

Belongs to the acyl carrier protein (ACP) family. In terms of processing, 4'-phosphopantetheine is transferred from CoA to a specific serine of apo-ACP by AcpS. This modification is essential for activity because fatty acids are bound in thioester linkage to the sulfhydryl of the prosthetic group.

The protein resides in the cytoplasm. The protein operates within lipid metabolism; fatty acid biosynthesis. Functionally, carrier of the growing fatty acid chain in fatty acid biosynthesis. The chain is Acyl carrier protein from Synechococcus elongatus (strain ATCC 33912 / PCC 7942 / FACHB-805) (Anacystis nidulans R2).